The primary structure comprises 790 residues: Aryl hydrocarbon receptor nuclear translocator (790 aa).

A compositionally biased stretch (polar residues) spans 1-25 (MAATTANPEMTSDVPSLGPNITSGN). Positions 1–98 (MAATTANPEM…LARENHSEIE (98 aa)) are disordered. Ala-2 carries the post-translational modification N-acetylalanine. Residue Lys-58 forms a Glycyl lysine isopeptide (Lys-Gly) (interchain with G-Cter in SUMO2) linkage. The span at 60 to 98 (LRCDEDQMSNDKERFARSDDEQSSADKERLARENHSEIE) shows a compositional bias: basic and acidic residues. Residue Ser-77 is modified to Phosphoserine. A DNA-binding region spans residues 88-128 (RLARENHSEIERRRRNKMTAYITELSDIVPTCSALARKPDK). In terms of domain architecture, bHLH spans 89 to 142 (LARENHSEIERRRRNKMTAYITELSDIVPTCSALARKPDKLTILRMAVSHMKSL). The required for heterodimer formation with HIF1A stretch occupies residues 112–168 (LSDIVPTCSALARKPDKLTILRMAVSHMKSLRGTGNTSTDGSYKPSFLTDQELKHLI). The required for heterodimer formation with EPAS1 stretch occupies residues 112-264 (LSDIVPTCSA…MCMGSRRSFI (153 aa)). 2 PAS domains span residues 161–235 (DQEL…LTGR) and 349–419 (PNCT…VKLK). The interval 167–171 (LILEA) is mediates the transcription activity and dimerization of the AHR:ARNT complex. One can recognise a PAC domain in the interval 424–467 (SVMFRFRSKNREWLWTRTSSFTFQNPYSDEIEYIICTNTNVKNS). 2 stretches are compositionally biased toward polar residues: residues 465–480 (KNSS…NPIQ) and 629–672 (HSNP…GNFQ). Disordered regions lie at residues 465-494 (KNSS…PLEV), 629-695 (HSNP…AAAY), and 729-790 (QWQG…SFSE). Low complexity predominate over residues 673–695 (SPSSFSSMSLSSTSTASSGAAAY). Residues 741-758 (SSEQHVQQPSTQQPNQPE) show a composition bias toward polar residues.

Monomer. Homodimer only upon binding to a DNA. Efficient DNA binding requires dimerization with another bHLH protein. Interacts with TACC3. Interacts with HIF1A, EPAS1, NPAS1 and NPAS3; forms a heterodimer that binds core DNA sequence 5'-TACGTG-3' within the hypoxia response element (HRE) of target gene promoters. Forms a heterodimer with AHRR, as well as with other bHLH proteins. Interacts with NOCA7. Interacts with TACC3. Interacts with AHR; the heterodimer ARNT:AHR binds to core DNA sequence 5'-TGCGTG-3' within the dioxin response element (DRE) of target gene promoters and activates their transcription. Interacts with SIM1 and NPAS4. Was expressed at almost the same level in all tissues except for the heart, liver, and small intestine.

It localises to the nucleus. Functionally, required for activity of the AHR. Upon ligand binding, AHR translocates into the nucleus, where it heterodimerizes with ARNT and induces transcription by binding to xenobiotic response elements (XRE). Not required for the ligand-binding subunit to translocate from the cytosol to the nucleus after ligand binding. The complex initiates transcription of genes involved in the regulation of a variety of biological processes, including angiogenesis, hematopoiesis, drug and lipid metabolism, cell motility and immune modulation. The heterodimer binds to core DNA sequence 5'-TACGTG-3' within the hypoxia response element (HRE) of target gene promoters and functions as a transcriptional regulator of the adaptive response to hypoxia. The heterodimer ARNT:AHR binds to core DNA sequence 5'-TGCGTG-3' within the dioxin response element (DRE) of target gene promoters and activates their transcription. This is Aryl hydrocarbon receptor nuclear translocator (ARNT) from Oryctolagus cuniculus (Rabbit).